The following is a 73-amino-acid chain: Large ribosomal subunit protein bL31 (73 aa).

This sequence belongs to the bacterial ribosomal protein bL31 family. Type A subfamily. In terms of assembly, part of the 50S ribosomal subunit.

Its function is as follows. Binds the 23S rRNA. This Rhizobium johnstonii (strain DSM 114642 / LMG 32736 / 3841) (Rhizobium leguminosarum bv. viciae) protein is Large ribosomal subunit protein bL31.